The following is a 361-amino-acid chain: UDP-N-acetylglucosamine--N-acetylmuramyl-(pentapeptide) pyrophosphoryl-undecaprenol N-acetylglucosamine transferase (361 aa).

UDP-N-acetyl-alpha-D-glucosamine is bound by residues 13–15 (TGG), Asn-125, Arg-167, Ser-196, Ile-251, 270–275 (ALTVTE), and Gln-296.

Belongs to the glycosyltransferase 28 family. MurG subfamily.

It localises to the cell inner membrane. The enzyme catalyses di-trans,octa-cis-undecaprenyl diphospho-N-acetyl-alpha-D-muramoyl-L-alanyl-D-glutamyl-meso-2,6-diaminopimeloyl-D-alanyl-D-alanine + UDP-N-acetyl-alpha-D-glucosamine = di-trans,octa-cis-undecaprenyl diphospho-[N-acetyl-alpha-D-glucosaminyl-(1-&gt;4)]-N-acetyl-alpha-D-muramoyl-L-alanyl-D-glutamyl-meso-2,6-diaminopimeloyl-D-alanyl-D-alanine + UDP + H(+). The protein operates within cell wall biogenesis; peptidoglycan biosynthesis. Its function is as follows. Cell wall formation. Catalyzes the transfer of a GlcNAc subunit on undecaprenyl-pyrophosphoryl-MurNAc-pentapeptide (lipid intermediate I) to form undecaprenyl-pyrophosphoryl-MurNAc-(pentapeptide)GlcNAc (lipid intermediate II). This chain is UDP-N-acetylglucosamine--N-acetylmuramyl-(pentapeptide) pyrophosphoryl-undecaprenol N-acetylglucosamine transferase, found in Psychrobacter arcticus (strain DSM 17307 / VKM B-2377 / 273-4).